Reading from the N-terminus, the 254-residue chain is Thiazole synthase (254 aa).

Lys96 acts as the Schiff-base intermediate with DXP in catalysis. Residues Gly157, 183-184 (AG), and 205-206 (NT) each bind 1-deoxy-D-xylulose 5-phosphate.

Belongs to the ThiG family. As to quaternary structure, homotetramer. Forms heterodimers with either ThiH or ThiS.

Its subcellular location is the cytoplasm. The catalysed reaction is [ThiS sulfur-carrier protein]-C-terminal-Gly-aminoethanethioate + 2-iminoacetate + 1-deoxy-D-xylulose 5-phosphate = [ThiS sulfur-carrier protein]-C-terminal Gly-Gly + 2-[(2R,5Z)-2-carboxy-4-methylthiazol-5(2H)-ylidene]ethyl phosphate + 2 H2O + H(+). It functions in the pathway cofactor biosynthesis; thiamine diphosphate biosynthesis. Its function is as follows. Catalyzes the rearrangement of 1-deoxy-D-xylulose 5-phosphate (DXP) to produce the thiazole phosphate moiety of thiamine. Sulfur is provided by the thiocarboxylate moiety of the carrier protein ThiS. In vitro, sulfur can be provided by H(2)S. This Bacillus velezensis (strain DSM 23117 / BGSC 10A6 / LMG 26770 / FZB42) (Bacillus amyloliquefaciens subsp. plantarum) protein is Thiazole synthase.